A 152-amino-acid chain; its full sequence is uncharacterized protein (152 aa).

A signal peptide spans 1–24 (MRKMLAYTLYIVTYLTYIMNEVEC).

This is an uncharacterized protein from Acheta domesticus (House cricket).